Consider the following 197-residue polypeptide: Imidazoleglycerol-phosphate dehydratase (197 aa).

It belongs to the imidazoleglycerol-phosphate dehydratase family.

The protein localises to the cytoplasm. It carries out the reaction D-erythro-1-(imidazol-4-yl)glycerol 3-phosphate = 3-(imidazol-4-yl)-2-oxopropyl phosphate + H2O. It participates in amino-acid biosynthesis; L-histidine biosynthesis; L-histidine from 5-phospho-alpha-D-ribose 1-diphosphate: step 6/9. The polypeptide is Imidazoleglycerol-phosphate dehydratase (Nitrosomonas europaea (strain ATCC 19718 / CIP 103999 / KCTC 2705 / NBRC 14298)).